A 953-amino-acid polypeptide reads, in one-letter code: Nonsense-mediated mRNA decay factor SMG8 (953 aa).

Disordered regions lie at residues 571 to 604 (AEDAELDPDEEDEELPTGEREEQHITQSNGCSQP) and 629 to 653 (PCFDQSSSSEAESTCSGTSSEESNT). The segment covering 573–586 (DAELDPDEEDEELP) has biased composition (acidic residues). Residues 595–604 (ITQSNGCSQP) are compositionally biased toward polar residues. A compositionally biased stretch (low complexity) spans 634 to 653 (SSSSEAESTCSGTSSEESNT).

This sequence belongs to the SMG8 family.

In terms of biological role, involved in nonsense-mediated decay (NMD) of mRNAs containing premature stop codons. Probable component of kinase complex containing nonC and recruited to stalled ribosomes. The protein is Nonsense-mediated mRNA decay factor SMG8 of Drosophila pseudoobscura pseudoobscura (Fruit fly).